A 179-amino-acid polypeptide reads, in one-letter code: Gamma-crystallin S (179 aa).

S2 is subject to N-acetylserine. Residues 2-5 are N-terminal arm; the sequence is SKTG. Beta/gamma crystallin 'Greek key' domains are found at residues 6–44 and 45–87; these read TKIT…RVEG and GTWA…RALH. A connecting peptide region spans residues 88-93; that stretch reads LSSGGQ. Beta/gamma crystallin 'Greek key' domains are found at residues 94–134 and 135–177; these read YKIQ…KVLD and GAWI…RRIV.

The protein belongs to the beta/gamma-crystallin family. Monomer.

Its function is as follows. Crystallins are the dominant structural components of the vertebrate eye lens. The protein is Gamma-crystallin S (CRYGS) of Oryctolagus cuniculus (Rabbit).